Here is a 4351-residue protein sequence, read N- to C-terminus: Protocadherin Fat 2 (4351 aa).

Residues 1–18 (MTLVLLGVAMVLLHRAAC) form the signal peptide. Residues 19–4050 (EKPLEETITP…IKRGDWGQQE (4032 aa)) are Extracellular-facing. Cadherin domains lie at 34–148 (THSL…KPLF) and 149–256 (SPPS…PPVI). N-linked (GlcNAc...) asparagine glycosylation is found at asparagine 39, asparagine 210, asparagine 280, and asparagine 330. Cadherin domains lie at 363–458 (EKAV…APVF), 459–564 (NRSS…QPMF), 565–669 (EEVN…VPVQ), 716–820 (DHFP…PPRF), 821–925 (PPGG…PPQC), 926–1032 (ITEH…SPHF), 1033–1142 (SSFV…RPVF), 1138–1242 (SRPV…SPMF), 1243–1346 (SHKL…SSIP), 1350–1448 (DESH…RPQF), 1449–1555 (LQDH…SPHF), 1556–1660 (TQPR…APIF), 1661–1758 (SKDE…APAF), 1759–1872 (LKST…PPRF), 1873–1968 (SEQI…SLQF), 1969–2070 (DQDI…IPEF), 2071–2171 (QHLP…NPLF), 2172–2272 (QSPY…PPTF), 2273–2379 (SQLV…PPEF), 2380–2481 (REPQ…SPEF), 2482–2585 (QQNV…APQF), 2586–2692 (KASG…LPKF), 2693–2799 (SEPL…RPVF), 2800–2908 (EADP…PPRF), 2909–3013 (ASED…SPQC), 3014–3115 (SQLL…APRF), 3116–3220 (FPSH…LPIF), 3221–3323 (LNSE…HPRF), 3324–3428 (THDL…PPRF), 3429–3533 (FQLN…PPST), and 3534–3631 (LPLE…APQQ). N-linked (GlcNAc...) asparagine glycosylation is found at asparagine 459, asparagine 568, asparagine 627, and asparagine 789. A glycan (N-linked (GlcNAc...) asparagine) is linked at asparagine 996. N-linked (GlcNAc...) asparagine glycosylation is found at asparagine 1175, asparagine 1276, and asparagine 1417. Residues asparagine 1899, asparagine 1998, asparagine 2007, asparagine 2102, asparagine 2165, asparagine 2183, asparagine 2325, asparagine 2368, asparagine 2387, asparagine 2430, asparagine 2470, asparagine 2547, and asparagine 2597 are each glycosylated (N-linked (GlcNAc...) asparagine). 3 N-linked (GlcNAc...) asparagine glycosylation sites follow: asparagine 3127, asparagine 3278, and asparagine 3312. N-linked (GlcNAc...) asparagine glycans are attached at residues asparagine 3432, asparagine 3603, asparagine 3770, asparagine 3774, asparagine 3815, asparagine 3842, asparagine 3875, and asparagine 3906. The Laminin G-like domain maps to 3775 to 3946 (GTTWRFSGQS…YLETWALSQC (172 aa)). Intrachain disulfides connect cysteine 3914-cysteine 3946, cysteine 3953-cysteine 3964, cysteine 3958-cysteine 3974, and cysteine 3976-cysteine 3985. 2 consecutive EGF-like domains span residues 3949-3986 (PGTTCSQNPCLNGGSCSPALGSGYLCRCPPLFSGRNCE) and 3988-4024 (GRENCTSAPCQEGGTCVSSPEGTSCSCPHPYTGDRCE). N-linked (GlcNAc...) asparagine glycosylation is present at asparagine 3991. Cystine bridges form between cysteine 3992/cysteine 4003, cysteine 3997/cysteine 4012, and cysteine 4014/cysteine 4023. The helical transmembrane segment at 4051 to 4071 (FLVIIVALPLLIIATVGLLLY) threads the bilayer. Residues 4072–4351 (CRRCKSHKPV…DYGSCEEVMF (280 aa)) are Cytoplasmic-facing. The segment at 4313-4340 (DCEVNGGPAPGRSQPRAPPNYEGSDMVE) is disordered.

As to quaternary structure, homodimer.

It is found in the cell membrane. The protein resides in the cell junction. The protein localises to the golgi apparatus. It localises to the trans-Golgi network. Functionally, involved in the regulation of cell migration. May be involved in mediating the organization of the parallel fibers of granule cells during cerebellar development. This chain is Protocadherin Fat 2 (Fat2), found in Mus musculus (Mouse).